The following is an 807-amino-acid chain: Glycerol-3-phosphate acyltransferase (807 aa).

Residues 308-313 (CHRSHM) carry the HXXXXD motif motif.

This sequence belongs to the GPAT/DAPAT family.

It localises to the cell inner membrane. It carries out the reaction sn-glycerol 3-phosphate + an acyl-CoA = a 1-acyl-sn-glycero-3-phosphate + CoA. The protein operates within phospholipid metabolism; CDP-diacylglycerol biosynthesis; CDP-diacylglycerol from sn-glycerol 3-phosphate: step 1/3. In Shewanella woodyi (strain ATCC 51908 / MS32), this protein is Glycerol-3-phosphate acyltransferase.